A 496-amino-acid chain; its full sequence is Cytochrome P450 71D181 (496 aa).

Residues 1–21 (MDISILWVAIILVISSYFIFM) traverse the membrane as a helical; Signal-anchor for type II membrane protein segment. Cysteine 435 lines the heme pocket. The disordered stretch occupies residues 471-496 (MSETPGLSGPRKNPLIMVPTIHNPTS).

The protein belongs to the cytochrome P450 family. The cofactor is heme.

The protein localises to the membrane. The enzyme catalyses gamma-terpinene + 2 reduced [NADPH--hemoprotein reductase] + 2 O2 = carvacrol + 2 oxidized [NADPH--hemoprotein reductase] + 3 H2O + 2 H(+). It catalyses the reaction (4S)-limonene + reduced [NADPH--hemoprotein reductase] + O2 = (1S,5R)-carveol + oxidized [NADPH--hemoprotein reductase] + H2O + H(+). It carries out the reaction (4R)-limonene + reduced [NADPH--hemoprotein reductase] + O2 = (1R,5S)-carveol + oxidized [NADPH--hemoprotein reductase] + H2O + H(+). The catalysed reaction is alpha-terpinene + 2 reduced [NADPH--hemoprotein reductase] + 2 O2 = carvacrol + 2 oxidized [NADPH--hemoprotein reductase] + 3 H2O + 2 H(+). Its pathway is secondary metabolite biosynthesis; terpenoid biosynthesis. Involved in the biosynthesis of phenolic monoterpenes natural products thymol and carvacrol which have a broad range of biological activities acting as antimicrobial compounds, insecticides, antioxidants and pharmaceutical agents. Catalyzes the C2-hydroxylation of gamma-terpinene and alpha-terpinene to produce carvacrol. Also mediates the C6-hydroxylation of (4S)-limonene and (4R)-limonene to form carveol. This is Cytochrome P450 71D181 from Thymus vulgaris (Thyme).